Here is a 185-residue protein sequence, read N- to C-terminus: MALHLTLARPYAKAAFADGQKANQLEAWLAVFTAFSKIIKNKEVARQIINPKFSDKEIKTLLFDLIQTIEPESTKQLKDKIDHFLQLLIDEKRLMILPDIALVYQQLLNKYQDIIEASVTYVFPLNDEHRQQIQKQLEKRFNAEVKLKMIKDESLLGGVIIRAGNWVMDGSIKGKLTRLAENLKG.

It belongs to the ATPase delta chain family. F-type ATPases have 2 components, F(1) - the catalytic core - and F(0) - the membrane proton channel. F(1) has five subunits: alpha(3), beta(3), gamma(1), delta(1), epsilon(1). F(0) has three main subunits: a(1), b(2) and c(10-14). The alpha and beta chains form an alternating ring which encloses part of the gamma chain. F(1) is attached to F(0) by a central stalk formed by the gamma and epsilon chains, while a peripheral stalk is formed by the delta and b chains.

The protein resides in the cell inner membrane. Its function is as follows. F(1)F(0) ATP synthase produces ATP from ADP in the presence of a proton or sodium gradient. F-type ATPases consist of two structural domains, F(1) containing the extramembraneous catalytic core and F(0) containing the membrane proton channel, linked together by a central stalk and a peripheral stalk. During catalysis, ATP synthesis in the catalytic domain of F(1) is coupled via a rotary mechanism of the central stalk subunits to proton translocation. This protein is part of the stalk that links CF(0) to CF(1). It either transmits conformational changes from CF(0) to CF(1) or is implicated in proton conduction. In Coxiella burnetii (strain CbuK_Q154) (Coxiella burnetii (strain Q154)), this protein is ATP synthase subunit delta.